The sequence spans 254 residues: Low affinity immunoglobulin gamma Fc region receptor III-A (254 aa).

The signal sequence occupies residues 1-20 (MWQLLLPTALLLLVSAGMRA). At 21–206 (EDLPKAVVFL…SSISSFFPPG (186 aa)) the chain is on the extracellular side. Ig-like C2-type domains are found at residues 24–105 (PKAV…LEVH) and 107–189 (GWLL…VNIT). Disulfide bonds link Cys-47–Cys-89 and Cys-128–Cys-172. An N-linked (GlcNAc...) asparagine glycan is attached at Asn-187. The helical transmembrane segment at 207-229 (YQVSFCLVMVLLFAVDTGLYFSV) threads the bilayer. Over 230 to 254 (KKSVPSSTRDWEDHKFKWSKDPQDK) the chain is Cytoplasmic.

Forms a heterooligomeric complex with ITAM-containing signaling subunits, either a homodimer of CD247, a homodimer of FCER1G or a heterodimer of CD247 and FCER1G, to form a functional receptor complex. Interacts (via transmembrane domain) with signaling subunits; this interaction is a prerequisite for receptor complex expression on the cell surface and intracellular signal transduction. Binds the Fc region of antigen-complexed IgG with a preference for IgG1 and IgG3 isotypes. Interacts with CD2; this interaction is involved in NK cell activation and cytotoxicity. Interacts with S100A4; this interaction inhibits PKC-dependent phosphorylation of FCGR3A. In terms of processing, glycosylated. Glycosylation plays an inhibitory role in the interaction with IgG1 and IgG2. Undergoes rapid ectodomain shedding upon NK cell stimulation. The soluble form is produced by a proteolytic cleavage mediated by ADAM17. Repeated stimulation causes receptor shedding, a mechanism that allows for increased NK cell motility and detachment from opsonized target cells while avoiding activation-induced NK cell apoptosis. In terms of tissue distribution, lymphocytes and monocytes.

The protein resides in the cell membrane. Its subcellular location is the secreted. Its function is as follows. Receptor for the invariable Fc fragment of immunoglobulin gamma (IgG). Optimally activated upon binding of clustered antigen-IgG complexes displayed on cell surfaces, triggers lysis of antibody-coated cells, a process known as antibody-dependent cellular cytotoxicity (ADCC). Does not bind free monomeric IgG, thus avoiding inappropriate effector cell activation in the absence of antigenic trigger. Mediates IgG effector functions on natural killer (NK) cells. Binds antigen-IgG complexes generated upon infection and triggers NK cell-dependent cytokine production and degranulation to limit viral load and propagation. Involved in the generation of memory-like adaptive NK cells capable to produce high amounts of IFNG and to efficiently eliminate virus-infected cells via ADCC. Regulates NK cell survival and proliferation, in particular by preventing NK cell progenitor apoptosis. Fc-binding subunit that associates with CD247 and/or FCER1G adapters to form functional signaling complexes. Following the engagement of antigen-IgG complexes, triggers phosphorylation of immunoreceptor tyrosine-based activation motif (ITAM)-containing adapters with subsequent activation of phosphatidylinositol 3-kinase signaling and sustained elevation of intracellular calcium that ultimately drive NK cell activation. The ITAM-dependent signaling coupled to receptor phosphorylation by PKC mediates robust intracellular calcium flux that leads to production of pro-inflammatory cytokines, whereas in the absence of receptor phosphorylation it mainly activates phosphatidylinositol 3-kinase signaling leading to cell degranulation. Costimulates NK cells and trigger lysis of target cells independently of IgG binding. Mediates the antitumor activities of therapeutic antibodies. Upon ligation on monocytes triggers TNFA-dependent ADCC of IgG-coated tumor cells. Mediates enhanced ADCC in response to afucosylated IgGs. The protein is Low affinity immunoglobulin gamma Fc region receptor III-A of Macaca mulatta (Rhesus macaque).